The following is a 186-amino-acid chain: MGLKADNWIRKMALEHKMIEPFCEANIGKGVVSYGLSSYGYDIRVGREFKIFTNVNSTVVDPKNFVEENVVDFEGDVCIVPANSFALARTIEYFKMPDNVLAICLGKSTYARCGIIVNVTPFEPGFEGHITIEISNTTPLPAKIYANEGIAQVLFLQGDEKCDTTYKDKKGKYQAQTGITLPRILK.

107–112 (KSTYAR) lines the dCTP pocket. Glutamate 133 functions as the Proton donor/acceptor in the catalytic mechanism. Residues glutamine 152, tyrosine 166, and glutamine 176 each contribute to the dCTP site.

The protein belongs to the dCTP deaminase family. Homotrimer.

The catalysed reaction is dCTP + H2O + H(+) = dUTP + NH4(+). Its pathway is pyrimidine metabolism; dUMP biosynthesis; dUMP from dCTP (dUTP route): step 1/2. Its function is as follows. Catalyzes the deamination of dCTP to dUTP. The polypeptide is dCTP deaminase (Campylobacter jejuni subsp. jejuni serotype O:2 (strain ATCC 700819 / NCTC 11168)).